The sequence spans 294 residues: Cyclin-dependent kinase 5 homolog (294 aa).

Positions 4-286 constitute a Protein kinase domain; sequence YDKMEKIGEG…AEAAMQHPYF (283 aa). ATP-binding positions include 10 to 18 and Lys33; that span reads IGEGTYGTV. Thr14 carries the phosphothreonine modification. Tyr15 is subject to Phosphotyrosine. Asp126 acts as the Proton acceptor in catalysis. Ser159 bears the Phosphoserine mark.

Belongs to the protein kinase superfamily. CMGC Ser/Thr protein kinase family. CDC2/CDKX subfamily. In terms of tissue distribution, abundantly expressed in all adult tissues. Lower levels found in larvae and early embryos. Barely detectable in late embryos.

It catalyses the reaction L-seryl-[protein] + ATP = O-phospho-L-seryl-[protein] + ADP + H(+). The catalysed reaction is L-threonyl-[protein] + ATP = O-phospho-L-threonyl-[protein] + ADP + H(+). Its function is as follows. Probably involved in the control of the cell cycle. Interacts with D1 and D3-type G1 cyclins. Possible regulator of neuronal differentiation and/or development. This is Cyclin-dependent kinase 5 homolog (Cdk5) from Drosophila melanogaster (Fruit fly).